A 248-amino-acid chain; its full sequence is 5'-nucleotidase SurE (248 aa).

A divalent metal cation-binding residues include aspartate 8, aspartate 9, serine 39, and asparagine 91.

Belongs to the SurE nucleotidase family. A divalent metal cation serves as cofactor.

Its subcellular location is the cytoplasm. It catalyses the reaction a ribonucleoside 5'-phosphate + H2O = a ribonucleoside + phosphate. Its function is as follows. Nucleotidase that shows phosphatase activity on nucleoside 5'-monophosphates. This Pseudoalteromonas atlantica (strain T6c / ATCC BAA-1087) protein is 5'-nucleotidase SurE.